The following is a 262-amino-acid chain: Thiazole synthase (262 aa).

Residue Lys97 is the Schiff-base intermediate with DXP of the active site. 1-deoxy-D-xylulose 5-phosphate-binding positions include Gly158, 185–186 (AG), and 207–208 (NT). The disordered stretch occupies residues 243–262 (DKAQASTPTVGQPFWHSAEY).

This sequence belongs to the ThiG family. As to quaternary structure, homotetramer. Forms heterodimers with either ThiH or ThiS.

Its subcellular location is the cytoplasm. It carries out the reaction [ThiS sulfur-carrier protein]-C-terminal-Gly-aminoethanethioate + 2-iminoacetate + 1-deoxy-D-xylulose 5-phosphate = [ThiS sulfur-carrier protein]-C-terminal Gly-Gly + 2-[(2R,5Z)-2-carboxy-4-methylthiazol-5(2H)-ylidene]ethyl phosphate + 2 H2O + H(+). It functions in the pathway cofactor biosynthesis; thiamine diphosphate biosynthesis. Functionally, catalyzes the rearrangement of 1-deoxy-D-xylulose 5-phosphate (DXP) to produce the thiazole phosphate moiety of thiamine. Sulfur is provided by the thiocarboxylate moiety of the carrier protein ThiS. In vitro, sulfur can be provided by H(2)S. The chain is Thiazole synthase from Neisseria meningitidis serogroup A / serotype 4A (strain DSM 15465 / Z2491).